Consider the following 417-residue polypeptide: Envelope glycoprotein D (417 aa).

Residues 1-18 (MQGPTLAVLGALLAVAVS) form the signal peptide. Residues 19–360 (LPTPAPRVTV…APATPAAPDA (342 aa)) are Virion surface-facing. Asn41 and Asn102 each carry an N-linked (GlcNAc...) asparagine; by host glycan. 3 disulfides stabilise this stretch: Cys75/Cys197, Cys114/Cys213, and Cys126/Cys135. The segment at 259–356 (EESKGYEPPP…HPPPAPATPA (98 aa)) is disordered. The segment covering 279–292 (GDDEAREDEGETED) has biased composition (acidic residues). A helical transmembrane segment spans residues 361 to 389 (VPVSVGIGIAAAAIACVAAAAAGAYFVYT). Topologically, residues 390–417 (RRRGAGPLPRKPKKLPAFGNVNYSALPG) are intravirion.

Belongs to the herpesviridae glycoprotein D family.

The protein localises to the virion membrane. Its function is as follows. Envelope glycoprotein that binds to host cell entry receptors, promoting the virus entry into host cells. May trigger fusion with host membrane, by recruiting the fusion machinery composed of gB and gH/gL. The polypeptide is Envelope glycoprotein D (gD) (Bovine herpesvirus 1.1 (strain Cooper) (BoHV-1)).